We begin with the raw amino-acid sequence, 1997 residues long: MDHFSTVLQRPPHFDEDGTEGRGDRGNGAGPGPAPPPPPPRGGLRDILNPVSSNSAVQSQAAAAAPPPPPAVASSSLHGIAASVPPPSSTNSMRATPHSSSSFNLRSPTREPSEYRHPLSSLATPAPFAASPPTSIANANNTNNNNALGAAGSLSSQPPPPPPTGPRSILNPPTPSQQHQQQHHHPNPFVAASAPSLPPPPSSLQAPPAITPIAGLSAPAPASGSLPLSAGGIGNSITVSSSSQPPARASQLHAPSAYYSPAESFRDRDSSVREKSSTGGSFYDPTAEASNGISGSSPRKDRDRDRDHRGTTRESQRRSVSGHSDTGSSWRNATQTSASNKTRDPYNYSPSSADYYNTRKKENYPVDNTTSSSIAAPSNFTVATRSPVAALSHPASIAAPASVGSLTGSISPRLSLRPPSMASPTIRSAVLANPTNGTTSTALPALGRNDSPPSKMSPGTSTNPSRAAGVMSFSNILSSSEPVPRPRATSPNNPDDDDDVPMKVERADSSEKVVKEKKERKPRQPKQPRISDIRHSESTPKGRRGSTKQESPLPNIRIPAKRMANGAPKQQKTFSAENEEKIRKAMDRIETRELPHEDEFEEELRLWRERREYKRQQMNQRDLRQRRQRRADYTEVEAQKLKLHADFGKRRYDDLNYDDALQEVRERELFAEKERKKDMQRKRRREKSMATTMEAKAAALARASAAQDEAERQKYMREAERANKKVQQTRLILQKGIKGPSRNTGPIEPNLEGGTMATFQAENMEPGKTKGKGRAGARPKKSKEQKQAEKDAAEAAQAALDAGLELPPKEETNKIRIKLTKTKAPKEADVDKDKENKEPQEPKEPKEPKEKVIKEKVVEEPKDPLELKFQSKGFNQIYDQIWRDLARKDVNKVFRLAIDSYSTKSSNLKKTAILASKEAKRWQLRTNKGTKDLQARAKRVMRDMMGFWKRNEREERDLRKAAEKQELENARKEEADREAARQKRKLNFLISQTELYSHFIGKKIKTNEVERSTDHPDEIAAEKDKIPENEMDIEVPTGPIGAKVTNFENLDFDAEDESTLRAAAMANAQNAIAEAQKKAREFNKEESKLDEDGEMNFQNPTMMGDVEIEQPKLLNCQLKEYQLKGLNWLVNLYEQGINGILADEMGLGKTVQSISVMAYLAEKYDIWGPFLVVAPASTLHNWQQEITKFVPQFKVLPYWGTAGDRKVLRKFWDRKHTTYKKDAPFHVMITSYQLVVSDVAYFQKMKWQYMILDEAQAIKSSQSSRWKCLLGFHCRNRLLLTGTPIQNNMQELWALLHFIMPSLFDSHDEFSEWFSKDIESHAQSNTKLNEDQLKRLHMILKPFMLRRVKKHVQKELGDKIEMDVFCDLTYRQRAMYANLRNQISIMDLIEKATLGDDDSASLMNLVMQFRKVCNHPDLFERADTASPYSFGHFAETASFIREGSQVTVGYSTRSLIQYELPRLLWRDGGRLHKAGEDNQVAGWRNQWLNEKFNIWTPEHIRESLAGTDNFSWLRFADTSYEEAYRASHKDLFARAVEMSTKKNRLAEIKIAYDEPEDLNFTPAHALFHIREREDRRPLAEITEQGILGSLMNVSRSAFSETGLGRLEQAAAPKASAPPIEVVCDSRSAVVERENIMFNAPMRKVLFGPTLAEEKALVVQKVPPSRYPPPALLPAPDKEKQKFTNITVPSMRRFVTDSGKLAKLDELLRELKENGHRVLLYFQMTRMIDLMEEYLTYRNYKYCRLDGSTKLEDRRDTVADFQTRPEIFIFLLSTRAGGLGINLTSADTVIFYDSDWNPTIDSQAMDRAHRLGQTKQVTVYRLITRGTIEERIRKRAMQKEEVQRVVITGGSSAAGGGVDFSGRRAPENRNRDIAMWLADDEQAEMIEKRERELLESGELDKMQKKSRGGNKRKRGGAGGEGKEVSLDEMYHEGEGNFDDGGNNIKGSGTATPNGAAGGEGGDGKGAVGGAAKKRKTGGSKKAKTTKQRLAIADGEIDI.

3 disordered regions span residues 1-378 (MDHF…AAPS), 397-579 (IAAP…AENE), and 674-858 (ERKK…EKVV). Residues 12–25 (PHFDEDGTEGRGDR) show a composition bias toward basic and acidic residues. Positions 32–41 (GPAPPPPPPR) are enriched in pro residues. Over residues 49-64 (NPVSSNSAVQSQAAAA) the composition is skewed to low complexity. Positions 89-107 (STNSMRATPHSSSSFNLRS) are enriched in polar residues. Positions 108–117 (PTREPSEYRH) are enriched in basic and acidic residues. Composition is skewed to low complexity over residues 118–156 (PLSSLATPAPFAASPPTSIANANNTNNNNALGAAGSLSS), 203–230 (SLQAPPAITPIAGLSAPAPASGSLPLSA), and 240–251 (SSSSQPPARASQ). A compositionally biased stretch (basic and acidic residues) spans 264 to 276 (SFRDRDSSVREKS). Residues 288–297 (EASNGISGSS) show a composition bias toward polar residues. Over residues 298-317 (PRKDRDRDRDHRGTTRESQR) the composition is skewed to basic and acidic residues. 2 stretches are compositionally biased toward polar residues: residues 318 to 340 (RSVSGHSDTGSSWRNATQTSASN) and 366 to 378 (VDNTTSSSIAAPS). The span at 411–420 (SPRLSLRPPS) shows a compositional bias: low complexity. Composition is skewed to polar residues over residues 433 to 442 (NPTNGTTSTA), 451 to 465 (SPPSKMSPGTSTNPS), and 472 to 481 (SFSNILSSSE). 2 stretches are compositionally biased toward basic and acidic residues: residues 500-519 (VPMKVERADSSEKVVKEKKE) and 529-540 (RISDIRHSESTP). Residues 666–735 (ERELFAEKER…VQQTRLILQK (70 aa)) are a coiled coil. A compositionally biased stretch (low complexity) spans 689–707 (MATTMEAKAAALARASAAQ). The span at 709–723 (EAERQKYMREAERAN) shows a compositional bias: basic and acidic residues. Residues 769-781 (TKGKGRAGARPKK) show a composition bias toward basic residues. Residues 782 to 793 (SKEQKQAEKDAA) show a composition bias toward basic and acidic residues. The segment covering 794–806 (EAAQAALDAGLEL) has biased composition (low complexity). Over residues 824 to 858 (APKEADVDKDKENKEPQEPKEPKEPKEKVIKEKVV) the composition is skewed to basic and acidic residues. The DBINO domain occupies 881-1006 (IWRDLARKDV…SHFIGKKIKT (126 aa)). The Helicase ATP-binding domain occupies 1130–1302 (VNLYEQGING…WALLHFIMPS (173 aa)). 1143 to 1150 (DEMGLGKT) is an ATP binding site. Positions 1253 to 1256 (DEAQ) match the DEAQ box motif. Positions 1702–1858 (KLDELLRELK…GSSAAGGGVD (157 aa)) constitute a Helicase C-terminal domain. Residues 1891 to 1902 (ELLESGELDKMQ) show a composition bias toward basic and acidic residues. A disordered region spans residues 1891–1986 (ELLESGELDK…GSKKAKTTKQ (96 aa)). Basic residues predominate over residues 1903-1914 (KKSRGGNKRKRG). Positions 1919–1933 (EGKEVSLDEMYHEGE) are enriched in basic and acidic residues. Over residues 1954-1967 (AAGGEGGDGKGAVG) the composition is skewed to gly residues. Over residues 1970-1985 (AKKRKTGGSKKAKTTK) the composition is skewed to basic residues.

The protein belongs to the SNF2/RAD54 helicase family. As to quaternary structure, component of the INO80 chromatin-remodeling complex.

The protein localises to the nucleus. It carries out the reaction ATP + H2O = ADP + phosphate + H(+). Functionally, ATPase component of the INO80 complex which remodels chromatin by shifting nucleosomes and is involved in DNA repair. The chain is Chromatin-remodeling ATPase INO80 (crf2-1) from Neurospora crassa (strain ATCC 24698 / 74-OR23-1A / CBS 708.71 / DSM 1257 / FGSC 987).